A 103-amino-acid chain; its full sequence is MAANNRNPESVIEKGKTRLTPPPLYKVILINDDFTPMDFVVKVLRHFFFMDEEMATRIMLKIHTEGAGICGTYPGDIAATKVQQVNEFSKQNQHPLMCVMEKE.

The protein belongs to the ClpS family. In terms of assembly, binds to the N-terminal domain of the chaperone ClpA.

In terms of biological role, involved in the modulation of the specificity of the ClpAP-mediated ATP-dependent protein degradation. The polypeptide is ATP-dependent Clp protease adapter protein ClpS (Nitrosomonas eutropha (strain DSM 101675 / C91 / Nm57)).